A 133-amino-acid polypeptide reads, in one-letter code: Holo-[acyl-carrier-protein] synthase (133 aa).

The Mg(2+) site is built by Asp8 and Glu57.

Belongs to the P-Pant transferase superfamily. AcpS family. It depends on Mg(2+) as a cofactor.

It is found in the cytoplasm. It catalyses the reaction apo-[ACP] + CoA = holo-[ACP] + adenosine 3',5'-bisphosphate + H(+). In terms of biological role, transfers the 4'-phosphopantetheine moiety from coenzyme A to a Ser of acyl-carrier-protein. This chain is Holo-[acyl-carrier-protein] synthase, found in Bartonella quintana (strain Toulouse) (Rochalimaea quintana).